Here is a 238-residue protein sequence, read N- to C-terminus: ATP synthase subunit a (238 aa).

Transmembrane regions (helical) follow at residues 16–36 (LIWLSMPLWLLSSMVPMTVLF), 79–99 (GLFMMILMLNLSGNFPFFFPV), 103–123 (FVFGFSFALSIWTCLVLSSLL), 129–149 (GLMSLVPTGCPLILVPFMVVV), and 209–229 (VFGAAEVAIACIQCYIFCVLL).

This sequence belongs to the ATPase A chain family. In terms of assembly, F-type ATPases have 2 components, CF(1) - the catalytic core - and CF(0) - the membrane proton channel. CF(1) has five subunits: alpha(3), beta(3), gamma(1), delta(1), epsilon(1). CF(0) has three main subunits: a, b and c.

It is found in the mitochondrion inner membrane. Mitochondrial membrane ATP synthase (F(1)F(0) ATP synthase or Complex V) produces ATP from ADP in the presence of a proton gradient across the membrane which is generated by electron transport complexes of the respiratory chain. F-type ATPases consist of two structural domains, F(1) - containing the extramembraneous catalytic core and F(0) - containing the membrane proton channel, linked together by a central stalk and a peripheral stalk. During catalysis, ATP synthesis in the catalytic domain of F(1) is coupled via a rotary mechanism of the central stalk subunits to proton translocation. Key component of the proton channel; it may play a direct role in the translocation of protons across the membrane. This Mytilus edulis (Blue mussel) protein is ATP synthase subunit a (ATP6).